The chain runs to 305 residues: Translation initiation factor eIF2B subunit alpha (305 aa).

Serine 2 carries the post-translational modification N-acetylserine. Threonine 291 is modified (phosphothreonine).

Belongs to the eIF-2B alpha/beta/delta subunits family. As to quaternary structure, component of the translation initiation factor 2B (eIF2B) complex which is a heterodecamer of two sets of five different subunits: alpha, beta, gamma, delta and epsilon. Subunits alpha, beta and delta comprise a regulatory subcomplex and subunits epsilon and gamma comprise a catalytic subcomplex. Within the complex, the hexameric regulatory complex resides at the center, with the two heterodimeric catalytic subcomplexes bound on opposite sides.

Its subcellular location is the cytoplasm. It localises to the cytosol. Functionally, acts as a component of the translation initiation factor 2B (eIF2B) complex, which catalyzes the exchange of GDP for GTP on the eukaryotic initiation factor 2 (eIF2) complex gamma subunit. Its guanine nucleotide exchange factor activity is repressed when bound to eIF2 complex phosphorylated on the alpha subunit, thereby limiting the amount of methionyl-initiator methionine tRNA available to the ribosome and consequently global translation is repressed. It activates the translation of GCN4 in response to low amino acid, carbon, or purine availability, by suppressing the inhibitory effects of multiple uORFs present in the leader of GCN4 mRNA. It may promote either repression or activation of GCN4 expression depending on amino acid availability. Modulation of GCN3 regulatory function in response to amino acid availability occurs post-translationally. This is Translation initiation factor eIF2B subunit alpha from Saccharomyces cerevisiae (strain ATCC 204508 / S288c) (Baker's yeast).